The following is a 623-amino-acid chain: Membrane protein insertase YidC (623 aa).

The helical transmembrane segment at 8 to 28 threads the bilayer; it reads LILATGLSFLVIMVWFFLFPP. Residues 33 to 64 are disordered; that stretch reads TEGEPTVATQQTAVAPSATPDAPTTAVPPDAD. Over residues 44-62 the composition is skewed to low complexity; that stretch reads TAVAPSATPDAPTTAVPPD. 4 helical membrane passes run 379 to 399, 449 to 469, 507 to 527, and 543 to 563; these read MGLA…PLAY, LPIL…FVTI, TTMA…SMWL, and IFAW…SGLV. Positions 601–617 are enriched in low complexity; sequence KPAAQPAGKAANDGAAP. A disordered region spans residues 601–623; sequence KPAAQPAGKAANDGAAPAKKRKP.

It belongs to the OXA1/ALB3/YidC family. Type 1 subfamily. In terms of assembly, interacts with the Sec translocase complex via SecD. Specifically interacts with transmembrane segments of nascent integral membrane proteins during membrane integration.

The protein localises to the cell inner membrane. Its function is as follows. Required for the insertion and/or proper folding and/or complex formation of integral membrane proteins into the membrane. Involved in integration of membrane proteins that insert both dependently and independently of the Sec translocase complex, as well as at least some lipoproteins. Aids folding of multispanning membrane proteins. The protein is Membrane protein insertase YidC of Cereibacter sphaeroides (strain KD131 / KCTC 12085) (Rhodobacter sphaeroides).